Here is a 606-residue protein sequence, read N- to C-terminus: CDPK-related kinase 8 (606 aa).

Residues 1-14 are compositionally biased toward polar residues; it reads MGGCTSKPSTSSGR. Positions 1-132 are disordered; the sequence is MGGCTSKPST…TEVPQREEEE (132 aa). G2 carries the N-myristoyl glycine lipid modification. A compositionally biased stretch (basic residues) spans 98–110; it reads KHIRAALRRRKGK. The region spanning 150–412 is the Protein kinase domain; the sequence is VELGEEIGRG…ASQALMHPWI (263 aa). Residues 156–164 and K182 contribute to the ATP site; that span reads IGRGHFGYT. The active-site Proton acceptor is D278. S318 carries the post-translational modification Phosphoserine. The interval 418–448 is autoinhibitory domain; the sequence is DMNIPFDILIFRQMKAYLRSSSLRKAALRAL. Residues 437-457 form a calmodulin binding (CaMBD) region; sequence SSSLRKAALRALSKTLIKDEI. EF-hand domains are found at residues 455-491, 492-527, 528-567, and 570-599; these read DEILYLKTQFSLLAPNKDGLITMDTIRMALASNATEA, MKESRIPEFLALLNGLQYRGMDFEEFCAAAINVHQH, ESLDCWEQSIRHAYELFDKNGNRAIVIEELASELGVGPSI, and HSVLHDWIRHTDGKLSFFGFVKLLHGVSVR. Residues N470, D472, E516, D545, N547, N549, E556, D581, and K583 each coordinate Ca(2+). At S585 the chain carries Phosphoserine.

It belongs to the protein kinase superfamily. Ser/Thr protein kinase family. CDPK subfamily. In terms of assembly, binds calmodulin (CaM) in a calcium-dependent manner. Autophosphorylated.

It is found in the membrane. It catalyses the reaction L-seryl-[protein] + ATP = O-phospho-L-seryl-[protein] + ADP + H(+). The catalysed reaction is L-threonyl-[protein] + ATP = O-phospho-L-threonyl-[protein] + ADP + H(+). With respect to regulation, activated by calcium and calmodulin. Autophosphorylation may play an important role in the regulation of the kinase activity. Its function is as follows. May play a role in signal transduction pathways that involve calcium as a second messenger. In Arabidopsis thaliana (Mouse-ear cress), this protein is CDPK-related kinase 8 (CRK8).